The following is a 1084-amino-acid chain: Teashirt homolog 1 (1084 aa).

Disordered stretches follow at residues 49-108 (EETE…SVSY), 140-167 (NSATSNNDASQKESSTPTPTPPTSTAST), and 269-298 (GHYRDDNRDKDSEKTKRWSKPRKRSLMEME). Polar residues-rich tracts occupy residues 57-71 (QSYQNSPVSTATNQD) and 140-152 (NSATSNNDASQKE). C2H2-type zinc fingers lie at residues 246–270 (FRCKDCSAAYDTLVELTVHMNETGH) and 307–331 (LKCMYCGHSFESLQDLSVHMIKTKH). The span at 269-284 (GHYRDDNRDKDSEKTK) shows a compositional bias: basic and acidic residues. The C2H2-type 3; atypical zinc-finger motif lies at 416–440 (LKCMECGSSHDTLQQLTAHMMVTGH). Disordered regions lie at residues 467 to 534 (SIPL…EKFE) and 653 to 728 (TGKV…LKAK). Basic and acidic residues-rich tracts occupy residues 496-534 (SEEKKEPEKEKEKEKAPPAAGDAERKIKEETEDATEKFE), 653-671 (TGKVSIKKEERPTEKEKSS), and 681-714 (KENKDLPKTEETGSKPQKKGSDSETGKAKKESTL). Ser-771 carries the phosphoserine modification. The tract at residues 855-879 (GRLTPKSSTPSTVSEKSDADGSSFE) is disordered. Polar residues predominate over residues 859 to 868 (PKSSTPSTVS). The segment at residues 891 to 961 (RKGRQSNWNP…NVKYQLRRTG (71 aa)) is a DNA-binding region (homeobox; atypical). C2H2-type zinc fingers lie at residues 976 to 998 (FFCNDCASQFRTASTYVSHLETH) and 1044 to 1067 (FQCKLCNRTFASKHAVKLHLSKTH).

Belongs to the teashirt C2H2-type zinc-finger protein family. As to quaternary structure, interacts (via homeobox domain) with APBB1 (via PID domain 1).

The protein resides in the nucleus. In terms of biological role, probable transcriptional regulator involved in developmental processes. May act as a transcriptional repressor (Potential). This Mus musculus (Mouse) protein is Teashirt homolog 1 (Tshz1).